The primary structure comprises 458 residues: Cysteine--tRNA ligase (458 aa).

Residue cysteine 27 coordinates Zn(2+). A 'HIGH' region motif is present at residues 29-39 (MTVYDYMHIGH). Residues cysteine 208, histidine 233, and glutamate 237 each coordinate Zn(2+). The 'KMSKS' region signature appears at 265–269 (KMSKS). Lysine 268 serves as a coordination point for ATP.

The protein belongs to the class-I aminoacyl-tRNA synthetase family. As to quaternary structure, monomer. Zn(2+) is required as a cofactor.

It is found in the cytoplasm. It catalyses the reaction tRNA(Cys) + L-cysteine + ATP = L-cysteinyl-tRNA(Cys) + AMP + diphosphate. The protein is Cysteine--tRNA ligase of Coxiella burnetii (strain Dugway 5J108-111).